Consider the following 545-residue polypeptide: CTP synthase (545 aa).

Residues 1 to 266 (MATNYIFVTG…DDFVCERFRL (266 aa)) form an amidoligase domain region. Ser-14 contacts CTP. Position 14 (Ser-14) interacts with UTP. ATP-binding positions include 15–20 (SLGKGI) and Asp-72. The Mg(2+) site is built by Asp-72 and Glu-140. CTP is bound by residues 147 to 149 (DIE), 187 to 192 (KTKPTQ), and Lys-223. UTP is bound by residues 187–192 (KTKPTQ) and Lys-223. 239-241 (KDV) is an ATP binding site. The Glutamine amidotransferase type-1 domain maps to 291-542 (TIGMVGKYTE…VKAAYENHKK (252 aa)). Gly-352 serves as a coordination point for L-glutamine. Cys-379 (nucleophile; for glutamine hydrolysis) is an active-site residue. Residues 380 to 383 (LGMQ), Glu-403, and Arg-470 each bind L-glutamine. Active-site residues include His-515 and Glu-517.

It belongs to the CTP synthase family. As to quaternary structure, homotetramer.

The enzyme catalyses UTP + L-glutamine + ATP + H2O = CTP + L-glutamate + ADP + phosphate + 2 H(+). It catalyses the reaction L-glutamine + H2O = L-glutamate + NH4(+). It carries out the reaction UTP + NH4(+) + ATP = CTP + ADP + phosphate + 2 H(+). It functions in the pathway pyrimidine metabolism; CTP biosynthesis via de novo pathway; CTP from UDP: step 2/2. Its activity is regulated as follows. Allosterically activated by GTP, when glutamine is the substrate; GTP has no effect on the reaction when ammonia is the substrate. The allosteric effector GTP functions by stabilizing the protein conformation that binds the tetrahedral intermediate(s) formed during glutamine hydrolysis. Inhibited by the product CTP, via allosteric rather than competitive inhibition. In terms of biological role, catalyzes the ATP-dependent amination of UTP to CTP with either L-glutamine or ammonia as the source of nitrogen. Regulates intracellular CTP levels through interactions with the four ribonucleotide triphosphates. The chain is CTP synthase from Haemophilus influenzae (strain PittEE).